The sequence spans 479 residues: Phosphatidylinositol 4-kinase type 2-beta (479 aa).

The span at 1–10 (MESGSEEPDE) shows a compositional bias: acidic residues. The interval 1–91 (MESGSEEPDE…PRVGAGHTGH (91 aa)) is disordered. Low complexity predominate over residues 18-34 (PALHAGPPAGRAAPGGA). Positions 42–62 (GLEEEEEGEEDSGPEGDGEEE) are enriched in acidic residues. Residues 118 to 449 (GVLPERISQG…VQMPRVIVER (332 aa)) enclose the PI3K/PI4K catalytic domain. The interval 124 to 130 (ISQGSSG) is G-loop. ATP is bound by residues S131 and K146. An important for substrate binding region spans residues 151 to 153 (EPY). Residues 159-172 (KWTKYFHKICCPCC) are important for interaction with membranes. ATP contacts are provided by residues 255 to 258 (QLFV) and 269 to 270 (RK). Residues 262–270 (KEADYWLRK) are important for interaction with membranes. The tract at residues 299–307 (RNTDRGNDN) is catalytic loop. The interval 340–360 (AIDNGLAFPFKHPDEWRAYPF) is activation loop. D342 is an ATP binding site. An important for interaction with membranes region spans residues 355 to 364 (WRAYPFHWAW).

Belongs to the PI3/PI4-kinase family. Type II PI4K subfamily.

The protein localises to the cytoplasm. Its subcellular location is the cytosol. The protein resides in the golgi apparatus membrane. It localises to the endoplasmic reticulum membrane. It is found in the cell membrane. The protein localises to the early endosome membrane. It catalyses the reaction a 1,2-diacyl-sn-glycero-3-phospho-(1D-myo-inositol) + ATP = a 1,2-diacyl-sn-glycero-3-phospho-(1D-myo-inositol 4-phosphate) + ADP + H(+). Functionally, contributes to the overall PI4-kinase activity of the cell. This contribution may be especially significant in plasma membrane, endosomal and Golgi compartments. The phosphorylation of phosphatidylinositol (PI) to PI4P is the first committed step in the generation of phosphatidylinositol 4,5-bisphosphate (PIP2), a precursor of the second messenger inositol 1,4,5-trisphosphate (InsP3). This chain is Phosphatidylinositol 4-kinase type 2-beta (PI4K2B), found in Gallus gallus (Chicken).